Reading from the N-terminus, the 587-residue chain is 5-aminolevulinate synthase, erythroid-specific, mitochondrial (587 aa).

Residues 1-49 constitute a mitochondrion transit peptide; sequence MVTAAMLLQCCPVPARGPTSLLGKVVKTHQFLFGIGRCPILATQGPNCS. A succinyl-CoA-binding site is contributed by Arg-163. Residues Cys-258 and Phe-259 each contribute to the pyridoxal 5'-phosphate site. Positions 280 and 299 each coordinate succinyl-CoA. Pyridoxal 5'-phosphate contacts are provided by Ser-332, His-360, and Thr-388. Lys-391 is an active-site residue. At Lys-391 the chain carries N6-(pyridoxal phosphate)lysine. Positions 420 and 421 each coordinate pyridoxal 5'-phosphate. Thr-508 is a succinyl-CoA binding site.

The protein belongs to the class-II pyridoxal-phosphate-dependent aminotransferase family. As to quaternary structure, homodimer. Interacts with SUCLA2. Pyridoxal 5'-phosphate serves as cofactor.

Its subcellular location is the mitochondrion inner membrane. It catalyses the reaction succinyl-CoA + glycine + H(+) = 5-aminolevulinate + CO2 + CoA. The protein operates within porphyrin-containing compound metabolism; protoporphyrin-IX biosynthesis; 5-aminolevulinate from glycine: step 1/1. Functionally, catalyzes the pyridoxal 5'-phosphate (PLP)-dependent condensation of succinyl-CoA and glycine to form aminolevulinic acid (ALA), with CoA and CO2 as by-products. Contributes significantly to heme formation during erythropoiesis. The protein is 5-aminolevulinate synthase, erythroid-specific, mitochondrial (ALAS2) of Pongo abelii (Sumatran orangutan).